Consider the following 98-residue polypeptide: Venom toxin OcyC11 (98 aa).

An N-terminal signal peptide occupies residues 1 to 20 (MKIACTLVLFVMLRCYVNAR).

In terms of processing, contains 4 disulfide bonds. As to expression, expressed by the venom gland.

The protein localises to the secreted. The polypeptide is Venom toxin OcyC11 (Opisthacanthus cayaporum (South American scorpion)).